The sequence spans 151 residues: UPF0208 membrane protein YfbV (151 aa).

At 1 to 45 (MSTPDNRSVNFFSLFRRGQHYAKTWPMEKRLAPVFVENRVIRMTR) the chain is on the cytoplasmic side. The helical transmembrane segment at 46 to 65 (YAIRFMPPVAVFTLCWQIAL) threads the bilayer. Over 66 to 68 (GGQ) the chain is Periplasmic. A helical membrane pass occupies residues 69 to 91 (LGPAVATALFALSLPMQGLWWLG). The Cytoplasmic segment spans residues 92–151 (KRSLTPLPPSILNWFYEVRGKLQEAGQALAPVEGKPDYQALADTLKRAFKQLDKTFLDDL).

It belongs to the UPF0208 family.

Its subcellular location is the cell inner membrane. The protein is UPF0208 membrane protein YfbV (yfbV) of Salmonella typhi.